The following is a 303-amino-acid chain: Glutamyl-Q tRNA(Asp) synthetase (303 aa).

L-glutamate-binding positions include 16–20 (RFAPS) and E52. The short motif at 19 to 29 (PSPSGPLHFGS) is the 'HIGH' region element. Residues C108, C110, Y122, and C126 each contribute to the Zn(2+) site. Positions 177 and 195 each coordinate L-glutamate. Residues 233–237 (KLSKQ) carry the 'KMSKS' region motif. ATP is bound at residue K236.

It belongs to the class-I aminoacyl-tRNA synthetase family. GluQ subfamily. Zn(2+) serves as cofactor.

Functionally, catalyzes the tRNA-independent activation of glutamate in presence of ATP and the subsequent transfer of glutamate onto a tRNA(Asp). Glutamate is transferred on the 2-amino-5-(4,5-dihydroxy-2-cyclopenten-1-yl) moiety of the queuosine in the wobble position of the QUC anticodon. The chain is Glutamyl-Q tRNA(Asp) synthetase from Vibrio vulnificus (strain YJ016).